Reading from the N-terminus, the 160-residue chain is Small ribosomal subunit protein bS16 (160 aa).

The segment at 115–139 (GGPTTEATRPKKKVSAKKAAKAVES) is disordered. Positions 124–134 (PKKKVSAKKAA) are enriched in basic residues.

It belongs to the bacterial ribosomal protein bS16 family.

The sequence is that of Small ribosomal subunit protein bS16 from Mycobacterium leprae (strain Br4923).